Reading from the N-terminus, the 767-residue chain is MGRRSRGRRLQQQQRPEDAEDGAEGGGKRGEAGWEGGYPEIVKENKLFEHYYQELKIVPEGEWGQFMDALREPLPATLRITGYKSHAKEILHCLKNKYFKELEDLEVDGQKVEVPQPLSWYPEELAWHTNLSRKILRKSPHLEKFHQFLVSETESGNISRQEAVSMIPPLLLNVRPHHKILDMCAAPGSKTTQLIEMLHADMNVPFPEGFVIANDVDNKRCYLLVHQAKRLSSPCIMVVNHDASSIPRLQIDVDGRKEILFYDRILCDVPCSGDGTMRKNIDVWKKWTTLNSLQLHGLQLRIATRGAEQLAEGGRMVYSTCSLNPIEDEAVIASLLEKSEGALELADVSNELPGLKWMPGITQWKVMTKDGQWFTDWDAVPHSRHTQIRPTMFPPKDPEKLQAMHLERCLRILPHHQNTGGFFVAVLVKKSSMPWNKRQPKLQGKSAETRESTQLSPADLTEGKPTDPSKLESPSFTGTGDTEIAHATEDLENNGSKKDGVCGPPPSKKMKLFGFKEDPFVFIPEDDPLFPPIEKFYALDPSFPRMNLLTRTTEGKKRQLYMVSKELRNVLLNNSEKMKVINTGIKVWCRNNSGEEFDCAFRLAQEGIYTLYPFINSRIITVSMEDVKILLTQENPFFRKLSSETYSQAKDLAKGSIVLKYEPDSANPDALQCPIVLCGWRGKASIRTFVPKNERLHYLRMMGLEVLGEKKKEGVILTNESAASTGQPDNDVTEGQRAGEPNSPDAEEANSPDVTAGCDPAGVHPPR.

Residues 1–36 are disordered; the sequence is MGRRSRGRRLQQQQRPEDAEDGAEGGGKRGEAGWEG. K46 participates in a covalent cross-link: Glycyl lysine isopeptide (Lys-Gly) (interchain with G-Cter in SUMO2). Position 139 is a phosphoserine; by AURKB (S139). S-adenosyl-L-methionine is bound by residues 184-190, D215, D242, and D268; that span reads CAAPGSK. The active-site Nucleophile is C321. Positions 436-481 are disordered; that stretch reads NKRQPKLQGKSAETRESTQLSPADLTEGKPTDPSKLESPSFTGTGD. S456 bears the Phosphoserine mark. The span at 461 to 470 shows a compositional bias: basic and acidic residues; that stretch reads TEGKPTDPSK. Glycyl lysine isopeptide (Lys-Gly) (interchain with G-Cter in SUMO2) cross-links involve residues K464 and K470. Phosphoserine is present on S473. Glycyl lysine isopeptide (Lys-Gly) (interchain with G-Cter in SUMO2) cross-links involve residues K511 and K516. Residue K586 is modified to N6-acetyllysine; alternate. An N6-malonyllysine; alternate modification is found at K586. K586 participates in a covalent cross-link: Glycyl lysine isopeptide (Lys-Gly) (interchain with G-Cter in SUMO2); alternate. At S593 the chain carries Phosphoserine. Residues K640, K654, and K660 each participate in a glycyl lysine isopeptide (Lys-Gly) (interchain with G-Cter in SUMO2) cross-link. T718 bears the Phosphothreonine mark. Over residues 719 to 730 the composition is skewed to polar residues; it reads NESAASTGQPDN. Residues 719 to 767 are disordered; that stretch reads NESAASTGQPDNDVTEGQRAGEPNSPDAEEANSPDVTAGCDPAGVHPPR. Phosphoserine occurs at positions 724, 743, and 751.

It belongs to the class I-like SAM-binding methyltransferase superfamily. RsmB/NOP family. TRM4 subfamily. As to quaternary structure, interacts with NPM1 and NCL during interphase; interaction is disrupted following phosphorylation at Ser-139. Post-translationally, phosphorylated at Ser-139 by AURKB during mitosis, leading to abolish methyltransferase activity and the interaction with NPM1. In terms of tissue distribution, expressed in adult and fetal brain and in lymphoblastoid cells.

It localises to the nucleus. Its subcellular location is the nucleolus. It is found in the cytoplasm. The protein localises to the mitochondrion. The protein resides in the cytoskeleton. It localises to the spindle. Its subcellular location is the secreted. It is found in the extracellular exosome. The enzyme catalyses cytidine(48) in tRNA + S-adenosyl-L-methionine = 5-methylcytidine(48) in tRNA + S-adenosyl-L-homocysteine + H(+). It carries out the reaction cytidine(49) in tRNA + S-adenosyl-L-methionine = 5-methylcytidine(49) in tRNA + S-adenosyl-L-homocysteine + H(+). The catalysed reaction is cytidine(50) in tRNA + S-adenosyl-L-methionine = 5-methylcytidine(50) in tRNA + S-adenosyl-L-homocysteine + H(+). It catalyses the reaction cytidine(34) in tRNA precursor + S-adenosyl-L-methionine = 5-methylcytidine(34) in tRNA precursor + S-adenosyl-L-homocysteine + H(+). The enzyme catalyses a cytidine in mRNA + S-adenosyl-L-methionine = a 5-methylcytidine in mRNA + S-adenosyl-L-homocysteine + H(+). Its activity is regulated as follows. Inhibited by magnesium ions. Functionally, RNA cytosine C(5)-methyltransferase that methylates cytosine to 5-methylcytosine (m5C) in various RNAs, such as tRNAs, mRNAs and some long non-coding RNAs (lncRNAs). Involved in various processes, such as epidermal stem cell differentiation, testis differentiation and maternal to zygotic transition during early development: acts by increasing protein synthesis; cytosine C(5)-methylation promoting tRNA stability and preventing mRNA decay. Methylates cytosine to 5-methylcytosine (m5C) at positions 34 and 48 of intron-containing tRNA(Leu)(CAA) precursors, and at positions 48, 49 and 50 of tRNA(Gly)(GCC) precursors. tRNA methylation is required generation of RNA fragments derived from tRNAs (tRFs). Also mediates C(5)-methylation of mitochondrial tRNAs. Catalyzes cytosine C(5)-methylation of mRNAs, leading to stabilize them and prevent mRNA decay: mRNA stabilization involves YBX1 that specifically recognizes and binds m5C-modified transcripts. Cytosine C(5)-methylation of mRNAs also regulates mRNA export: methylated transcripts are specifically recognized by THOC4/ALYREF, which mediates mRNA nucleo-cytoplasmic shuttling. Also mediates cytosine C(5)-methylation of non-coding RNAs, such as vault RNAs (vtRNAs), promoting their processing into regulatory small RNAs. Cytosine C(5)-methylation of vtRNA VTRNA1.1 promotes its processing into small-vault RNA4 (svRNA4) and regulates epidermal differentiation. May act downstream of Myc to regulate epidermal cell growth and proliferation. Required for proper spindle assembly and chromosome segregation, independently of its methyltransferase activity. This chain is RNA cytosine C(5)-methyltransferase NSUN2, found in Homo sapiens (Human).